Here is a 213-residue protein sequence, read N- to C-terminus: MYKVALFDLDGTLINSEHKNREAWARLFRRHGVPYDDSVLRSFTGRPAKEAMADHVASFAGHSVDELCAEVAAYAALPDMPAAVTVDGAMELLHQLQQMRVPLGVVTSGPRDYAESALTTLGALQLLDVLITADDVSRGKPDPEGYSTACSALNVEPSQAIVFEDAPAGILAAKRAGIFCVGLTTTHDAEALAEADVLLKDLTEVRWPHIGPS.

The active-site Nucleophile is the Asp-8. A divalent metal cation is bound by residues Asp-8 and Asp-10. Residues Asp-8–Asp-10, Thr-107–Ser-108, and Lys-140 each bind substrate. Asp-10 (proton donor) is an active-site residue. Asp-165 serves as a coordination point for a divalent metal cation.

This sequence belongs to the HAD-like hydrolase superfamily. CbbY/CbbZ/Gph/YieH family. The cofactor is Mg(2+). Requires Mn(2+) as cofactor. Co(2+) is required as a cofactor.

The enzyme catalyses validoxylamine A 7'-phosphate + H2O = validoxylamine A + phosphate. In terms of biological role, involved in the biosynthesis of the antifungal agent validamycin A. Catalyzes the dephosphorylation of validoxylamine A 7'-phosphate to yield validoxylamine A. VldH is also able to convert trehalose 6-phosphate to trehalose. The protein is Validoxylamine A 7'-phosphate phosphatase of Streptomyces hygroscopicus subsp. limoneus.